The primary structure comprises 992 residues: Sorting nexin-19 (992 aa).

Residues 95–272 form the PXA domain; that stretch reads ERQLEREINR…VLVGIFSKAR (178 aa). Residues 410 to 442 are disordered; the sequence is ALEPKDGEASEGAEAEEGPGTETETGLPVSTLN. Acidic residues predominate over residues 418–428; sequence ASEGAEAEEGP. One can recognise a PX domain in the interval 533–663; that stretch reads LRITGTITAR…EFLALNTDAR (131 aa). Arg-582 and Arg-629 together coordinate a 1,2-diacyl-sn-glycero-3-phospho-(1D-myo-inositol-3-phosphate). Disordered regions lie at residues 692 to 726, 778 to 797, and 973 to 992; these read FPRSEPQSPTEELSEAETESKPQTEGKKASKSRLR, QPTKAPEKDPEQPPKGRVDS, and AATTSASDTPGNSKRMGVSS. Composition is skewed to basic and acidic residues over residues 709-719 and 782-795; these read TESKPQTEGKK and APEKDPEQPPKGRV. Residues 980–992 show a composition bias toward polar residues; sequence DTPGNSKRMGVSS.

This sequence belongs to the sorting nexin family. As to quaternary structure, interacts with PTPRN.

The protein localises to the early endosome membrane. It localises to the cytoplasmic vesicle membrane. In terms of biological role, plays a role in intracellular vesicle trafficking and exocytosis. May play a role in maintaining insulin-containing dense core vesicles in pancreatic beta-cells and in preventing their degradation. May play a role in insulin secretion. Interacts with membranes containing phosphatidylinositol 3-phosphate (PtdIns(3P)). The protein is Sorting nexin-19 (SNX19) of Homo sapiens (Human).